We begin with the raw amino-acid sequence, 482 residues long: Cardiolipin synthase (482 aa).

2 helical membrane-spanning segments follow: residues 4–24 (LAYL…VTVF) and 34–54 (WAWL…YLIF). 2 consecutive PLD phosphodiesterase domains span residues 217–244 (LNYR…GDEY) and 395–422 (DNGF…DFRS). Catalysis depends on residues His222, Lys224, Asp229, His400, Lys402, and Asp407.

Belongs to the phospholipase D family. Cardiolipin synthase subfamily.

The protein resides in the cell membrane. The catalysed reaction is 2 a 1,2-diacyl-sn-glycero-3-phospho-(1'-sn-glycerol) = a cardiolipin + glycerol. Functionally, catalyzes the reversible phosphatidyl group transfer from one phosphatidylglycerol molecule to another to form cardiolipin (CL) (diphosphatidylglycerol) and glycerol. This Listeria innocua serovar 6a (strain ATCC BAA-680 / CLIP 11262) protein is Cardiolipin synthase (cls).